We begin with the raw amino-acid sequence, 234 residues long: Large ribosomal subunit protein uL1 (234 aa).

It belongs to the universal ribosomal protein uL1 family. As to quaternary structure, part of the 50S ribosomal subunit.

Binds directly to 23S rRNA. The L1 stalk is quite mobile in the ribosome, and is involved in E site tRNA release. Its function is as follows. Protein L1 is also a translational repressor protein, it controls the translation of the L11 operon by binding to its mRNA. The sequence is that of Large ribosomal subunit protein uL1 from Salmonella gallinarum (strain 287/91 / NCTC 13346).